A 141-amino-acid chain; its full sequence is MAMTVHCDIVSAEGEIFSGLVEMVVAHGELGDLGIALGHAPLITNLKPGPIRLIKQGGEAEVFYISGGFLEVQPNMVKVLADTVQRAADLDEASAQEAVKAAEKALNEKGADFDYGSAAARLAEAAAQLRTVQQIRKKFGG.

It belongs to the ATPase epsilon chain family. As to quaternary structure, F-type ATPases have 2 components, CF(1) - the catalytic core - and CF(0) - the membrane proton channel. CF(1) has five subunits: alpha(3), beta(3), gamma(1), delta(1), epsilon(1). CF(0) has three main subunits: a, b and c.

Its subcellular location is the cell inner membrane. In terms of biological role, produces ATP from ADP in the presence of a proton gradient across the membrane. In Pseudomonas fluorescens (strain ATCC BAA-477 / NRRL B-23932 / Pf-5), this protein is ATP synthase epsilon chain.